The chain runs to 506 residues: Arylsulfatase A (506 aa).

The first 17 residues, 1 to 17, serve as a signal peptide directing secretion; that stretch reads MALGTLFLALAAGLSTA. Residues aspartate 28, aspartate 29, and cysteine 68 each coordinate Ca(2+). Cysteine 68 serves as the catalytic Nucleophile. The residue at position 68 (cysteine 68) is a 3-oxoalanine (Cys). Residue lysine 122 coordinates substrate. Histidine 124 is an active-site residue. A substrate-binding site is contributed by serine 149. 2 disulfides stabilise this stretch: cysteine 155–cysteine 171 and cysteine 160–cysteine 167. N-linked (GlcNAc...) asparagine glycosylation occurs at asparagine 157. Asparagine 183 carries an N-linked (GlcNAc...) asparagine glycan. Residue histidine 228 coordinates substrate. Ca(2+) contacts are provided by aspartate 280 and asparagine 281. 4 disulfide bridges follow: cysteine 299-cysteine 413, cysteine 487-cysteine 499, cysteine 488-cysteine 501, and cysteine 492-cysteine 498. Position 301 (lysine 301) interacts with substrate. N-linked (GlcNAc...) asparagine glycosylation occurs at asparagine 349.

This sequence belongs to the sulfatase family. In terms of assembly, homodimer at neutral pH and homooctamer at acidic pH. Exists both as a single chain of 58 kDa (component A) or as a chain of 50 kDa (component B) linked by disulfide bond(s) to a 7 kDa chain (component C). Interacts with SUMF1. Ca(2+) is required as a cofactor. The conversion to 3-oxoalanine (also known as C-formylglycine, FGly), of a serine or cysteine residue in prokaryotes and of a cysteine residue in eukaryotes, is critical for catalytic activity. This post-translational modification is severely defective in multiple sulfatase deficiency (MSD).

It localises to the endoplasmic reticulum. The protein resides in the lysosome. It catalyses the reaction an N-acyl-1-beta-D-(3-O-sulfo)-galactosyl-sphing-4-enine + H2O = a beta-D-galactosyl-(1&lt;-&gt;1')-N-acylsphing-4-enine + sulfate + H(+). Functionally, hydrolyzes cerebroside sulfate. The polypeptide is Arylsulfatase A (Arsa) (Mus musculus (Mouse)).